The chain runs to 94 residues: Neutrophil defensin 6 (94 aa).

The N-terminal stretch at 1–19 (MRTIAILAAILLFALLAQA) is a signal peptide. A propeptide spanning residues 20 to 61 (KSLQETADEAATQEQPGEDDQDLAVSFEENGLSTLRASGSQA) is cleaved from the precursor. 3 disulfide bridges follow: cysteine 65/cysteine 93, cysteine 67/cysteine 82, and cysteine 72/cysteine 92.

The protein belongs to the alpha-defensin family.

It is found in the secreted. In terms of biological role, defensins 6 and 7 have bacteriostatic activity against Gram-positive bacteria S.aureus and L.monocytogenes and Gram-negative bacterium E.coli and antifungal activity against C.neoformans. Defensin 7 has microbicidial activity against Gram-positive bacteria S.aureus and L.monocytogenes. In Macaca mulatta (Rhesus macaque), this protein is Neutrophil defensin 6.